Consider the following 456-residue polypeptide: Alcohol acyltransferase 1 (456 aa).

Residues His-166 and Asp-382 each act as proton acceptor in the active site.

This sequence belongs to the plant acyltransferase family. As to expression, expressed in fruit.

The enzyme catalyses 3-(methylsulfanyl)propanoyl-CoA + butan-1-ol = butyl 3-(methylsulfanyl)propanoate + CoA. The catalysed reaction is ethanol + benzoyl-CoA = ethyl benzoate + CoA. It carries out the reaction butan-1-ol + benzoyl-CoA = butyl benzoate + CoA. It catalyses the reaction 2-(methylsulfanyl)acetyl-CoA + butan-1-ol = butyl 2-(methylsulfanyl)acetate + CoA. Functionally, involved in the biosynthesis of volatile esters which confer kiwifruit flavor. Alcohol acyl transferase that can use a wide range of alcohols as substrate to produce esters. Exhibits benzoyl-CoA:alcohol O-acyltransferase activity. The sequence is that of Alcohol acyltransferase 1 from Actinidia deliciosa (Kiwi).